Here is a 249-residue protein sequence, read N- to C-terminus: Probable transcriptional regulator ycf27 (249 aa).

The region spanning His-13–Leu-126 is the Response regulatory domain. Asp-62 carries the 4-aspartylphosphate modification. The segment at residues Asp-82 to Gly-100 is a DNA-binding region (H-T-H motif). Residues Ile-142–Lys-246 constitute a DNA-binding region (ompR/PhoB-type).

It localises to the plastid. The protein localises to the chloroplast. Functionally, probable promoter-specific protein mediating the interaction between DNA and RNA polymerase. In Cyanidium caldarium (Red alga), this protein is Probable transcriptional regulator ycf27 (ycf27).